Reading from the N-terminus, the 516-residue chain is Histidine ammonia-lyase (516 aa).

Positions 143–145 (ASG) form a cross-link, 5-imidazolinone (Ala-Gly). 2,3-didehydroalanine (Ser) is present on serine 144.

It belongs to the PAL/histidase family. Contains an active site 4-methylidene-imidazol-5-one (MIO), which is formed autocatalytically by cyclization and dehydration of residues Ala-Ser-Gly.

The protein resides in the cytoplasm. The catalysed reaction is L-histidine = trans-urocanate + NH4(+). It functions in the pathway amino-acid degradation; L-histidine degradation into L-glutamate; N-formimidoyl-L-glutamate from L-histidine: step 1/3. The protein is Histidine ammonia-lyase of Koribacter versatilis (strain Ellin345).